The following is a 393-amino-acid chain: Sugar efflux transporter B (393 aa).

12 helical membrane passes run phenylalanine 13–leucine 33, alanine 51–leucine 71, lysine 82–asparagine 102, phenylalanine 106–methionine 126, valine 152–phenylalanine 172, valine 174–leucine 194, leucine 219–methionine 239, leucine 253–glycine 273, phenylalanine 283–histidine 303, valine 306–glycine 326, leucine 344–alanine 364, and isoleucine 366–cysteine 386.

Belongs to the major facilitator superfamily. Set transporter family.

It localises to the cell inner membrane. In terms of biological role, involved in the efflux of sugars. The physiological role may be the detoxification of non-metabolizable sugar analogs. Can transport lactose and glucose. This is Sugar efflux transporter B (setB) from Escherichia coli (strain K12).